Here is a 479-residue protein sequence, read N- to C-terminus: Endosomal/lysosomal proton channel TMEM175 (479 aa).

The interval 1–26 (MSGPQAPEPTLEGQADASAGSPDEDA) is disordered. Residues 1–33 (MSGPQAPEPTLEGQADASAGSPDEDAAEGIQHS) lie on the Cytoplasmic side of the membrane. The helical transmembrane segment at 34–56 (HRMLSFSDALLSIIATVMEFDKS) threads the bilayer. The RxxxFSD motif 1 signature appears at 35–41 (RMLSFSD). The tract at residues 52–58 (EFDKSVQ) is short helix H2-1. Residues 57–64 (VQRLLATR) lie on the Lumenal side of the membrane. A helical membrane pass occupies residues 65–87 (IAVYLMTFLIVTVAWAAHTRLFQ). Over 88–93 (VVGKID) the chain is Cytoplasmic. The chain crosses the membrane as a helical span at residues 94–103 (DTLALLNLFS). Over 104–113 (LMVTFPEVPL) the chain is Lumenal. A helical membrane pass occupies residues 114–135 (GIFLFCMCVIAIGAVQALIVLY). At 136-159 (AFHFPHLLSPQIERSAHRGLYRQR) the chain is on the cytoplasmic side. Residues 160–180 (VLGIIVRGPALCLAAAGFSLF) traverse the membrane as a helical segment. Over 181–185 (FYPAS) the chain is Lumenal. Residues 186-205 (YLLMAMVIVLPHVSKAAGWC) form a helical membrane-spanning segment. The Cytoplasmic portion of the chain corresponds to 206-232 (RAQLVGPREPPAHSVEVFTFDLHEPLS). Residues 233-257 (KERVEAFSDGVYAIVATLLILDICE) form a helical membrane-spanning segment. The RxxxFSD motif 2 signature appears at 235–241 (RVEAFSD). Over 258–284 (DNVPDAKDVKEKFQGSLVAALGESGPH) the chain is Lumenal. The tract at residues 263–271 (AKDVKEKFQ) is short helix H1-2. Positions 273 to 279 (SLVAALG) are short helix H2-2. The chain crosses the membrane as a helical span at residues 285-307 (FLAYFGSFATVGLLWFAHHSLFL). Over 308-313 (HIRRAT) the chain is Cytoplasmic. The helical transmembrane segment at 314-335 (QPMGLLNTLSLAFVGGLPLAYQ) threads the bilayer. At 336 to 350 (QTSAFTKQPRDELES) the chain is on the lumenal side. A helical membrane pass occupies residues 351-371 (VRISCAIIFLASIFQFAIWTT). Residues 372-391 (ALLQEGETLQPSARFGGREH) lie on the Cytoplasmic side of the membrane. The helical transmembrane segment at 392-415 (AFMFAKLALYPCASLLAFACTCVL) threads the bilayer. Residues 416–417 (SS) lie on the Lumenal side of the membrane. Residues 418-444 (FSTAIFHAMQIAVPFAFLLLRLLVRLA) traverse the membrane as a helical segment. Residues 445–479 (LAGLRALRGLVGPVLARPAPGAADEAQSPLLPAPC) are Cytoplasmic-facing.

Belongs to the TMEM175 family. In terms of assembly, homodimer. Interacts with AKT (AKT1, AKT2 or AKT3); leading to formation of the lysoK(GF) complex, which activates the channel. Interacts with LAMP1; inhibiting the proton channel activity of TMEM175. Interacts with LAMP2; inhibiting the proton channel activity of TMEM175.

It is found in the endosome membrane. It localises to the lysosome membrane. The catalysed reaction is H(+)(in) = H(+)(out). The enzyme catalyses K(+)(in) = K(+)(out). Its activity is regulated as follows. Active at low pH (under pH 4.6): proton channel activity is activated by luminal side protons. Polyunsaturated fatty acids, such as arachidonic acid, also activate the channel activity. Proton channel activity is directly inhibited by LAMP1 or LAMP2, facilitating lysosomal acidification. Channel activity is activated following interaction with AKT (AKT1, AKT2 or AKT3): interaction promotes activation from closed to an open state. Activation by AKT is independent of AKT serine/threonine-protein kinase activity. In terms of biological role, proton-activated proton channel that catalyzes proton efflux from endosomes and lysosomes to maintain a steady-state pH. Activated at low pH (under pH 4.6) by luminal side protons: selectively mediates lysosomal proton release from lysosomes, eliciting a proton leak that balances V-ATPase activity to maintain pH homeostasis. Regulation of lumenal pH stability is required for autophagosome-lysosome fusion. Also acts as a potassium channel at higher pH, regulating potassium conductance in endosomes and lysosomes. Constitutes the pore-forming subunit of the lysoK(GF) complex, a complex activated by extracellular growth factors. The lysoK(GF) complex is composed of TMEM175 and AKT (AKT1, AKT2 or AKT3), a major target of growth factor receptors: in the complex, TMEM175 channel is opened by conformational changes by AKT, leading to its activation. The lysoK(GF) complex is required to protect neurons against stress-induced damage. The protein is Endosomal/lysosomal proton channel TMEM175 of Bos taurus (Bovine).